The primary structure comprises 462 residues: L-seryl-tRNA(Sec) selenium transferase (462 aa).

An N6-(pyridoxal phosphate)lysine modification is found at lysine 293.

The protein belongs to the SelA family. The cofactor is pyridoxal 5'-phosphate.

It is found in the cytoplasm. It carries out the reaction L-seryl-tRNA(Sec) + selenophosphate + H(+) = L-selenocysteinyl-tRNA(Sec) + phosphate. The protein operates within aminoacyl-tRNA biosynthesis; selenocysteinyl-tRNA(Sec) biosynthesis; selenocysteinyl-tRNA(Sec) from L-seryl-tRNA(Sec) (bacterial route): step 1/1. Functionally, converts seryl-tRNA(Sec) to selenocysteinyl-tRNA(Sec) required for selenoprotein biosynthesis. This Clostridium botulinum (strain 657 / Type Ba4) protein is L-seryl-tRNA(Sec) selenium transferase.